A 520-amino-acid polypeptide reads, in one-letter code: Laccase-4 (520 aa).

An N-terminal signal peptide occupies residues 1-18 (MGRFSSLCALTAVIHSFG). Plastocyanin-like domains are found at residues 24 to 149 (IGPV…MVVY), 161 to 303 (VDDE…ILRY), and 370 to 491 (TVPV…FSED). Asn-73 and Asn-76 each carry an N-linked (GlcNAc...) asparagine glycan. Positions 86, 88, 131, and 133 each coordinate Cu cation. Cystine bridges form between Cys-107/Cys-509 and Cys-139/Cys-227. Asn-239 and Asn-399 each carry an N-linked (GlcNAc...) asparagine glycan. His-418, His-421, His-423, His-473, Cys-474, His-475, and His-479 together coordinate Cu cation. The N-linked (GlcNAc...) asparagine glycan is linked to Asn-497.

This sequence belongs to the multicopper oxidase family. In terms of assembly, homodimer. Cu cation is required as a cofactor.

Its subcellular location is the secreted. It carries out the reaction 4 hydroquinone + O2 = 4 benzosemiquinone + 2 H2O. Lignin degradation and detoxification of lignin-derived products. The protein is Laccase-4 (LCC4) of Trametes villosa (White-rot fungus).